The chain runs to 308 residues: MAGKTMNYLSTYLKGLAMGAADVVPGVSGGTIAFITGIYDTLLESIRRINPSLLKVWKAQGLAGVFRHINGLFLITLFGGIFTSIATLAKLISWLLVTHPIPIWSFFFGLILVSVWHMLRQIEQKKLSRLLWLIAGAIFAYGITVLKPLHLEPTYINVLISGAIAICAMILPGISGSFILLLIGMYAPVLGAVKTFQLDILLIFLTGCVIGLLSFSHILSWLLRRYRDVTLTFLTGLMLGTLPKIWPWKETLSWRVNSSGEQVPLLQRNLSPFEFETLTSQPSQWLLALVLMLAAVALVLGLEKYAEK.

Transmembrane regions (helical) follow at residues 15–35 (GLAM…IAFI), 69–89 (INGL…ATLA), 91–111 (LISW…FGLI), 130–150 (LLWL…KPLH), 163–183 (AIAI…LLLI), 200–220 (ILLI…HILS), 228–248 (DVTL…IWPW), and 282–302 (PSQW…VLGL).

The protein belongs to the PopT family.

Its subcellular location is the cell inner membrane. Its activity is regulated as follows. Active in alkaline conditions. Functionally, flippase that catalyzes the transport of undecaprenyl phosphate (UndP) across the cytoplasmic membrane, from the external side to the cytoplasmic side. Is involved in UndP recycling during peptidoglycan synthesis. Required for cell shape maintenance at alkaline pH and peptidoglycan maintenance. Required by the cholera pathogen for growth and cell shape maintenance in the intestine. This Vibrio cholerae serotype O1 (strain ATCC 39315 / El Tor Inaba N16961) protein is Polyprenyl-phosphate transporter.